The chain runs to 241 residues: MPPLLPLRLCRLWPRNPPSRLLGAAAGQRSRPSTYYELLGVHPGASTEEVKRAFFSKSKELHPDRDPGNPSLHSRFVELSEAYRVLSREQSRRSYDDQLRSGSPPKSPRTTVHDKSAHQTHSSWTPPNAQYWSQFHSVRPQGPQLRQQQHKQNKQVLGYCLLLMLAGMGLHYIAFRKVKQMHLNFMDEKDRIITAFYNEARARARANRGILQQERQRLGQRQPPPSEPTQGPEIVPRGAGP.

The J domain maps to 34–99; it reads TYYELLGVHP…QSRRSYDDQL (66 aa). Residues 88–99 are compositionally biased toward basic and acidic residues; the sequence is REQSRRSYDDQL. The interval 88-129 is disordered; the sequence is REQSRRSYDDQLRSGSPPKSPRTTVHDKSAHQTHSSWTPPNA. Residues 119 to 129 are compositionally biased toward polar residues; the sequence is QTHSSWTPPNA. A helical transmembrane segment spans residues 156–175; sequence VLGYCLLLMLAGMGLHYIAF. A disordered region spans residues 212–241; sequence QQERQRLGQRQPPPSEPTQGPEIVPRGAGP.

The protein resides in the membrane. The polypeptide is DnaJ homolog subfamily C member 4 (DNAJC4) (Homo sapiens (Human)).